Reading from the N-terminus, the 323-residue chain is Prostaglandin F synthase 1 (323 aa).

Residues 20–24 and aspartate 50 contribute to the NADP(+) site; that span reads GFGTY. Tyrosine 55 functions as the Proton donor in the catalytic mechanism. Histidine 117 serves as a coordination point for substrate. NADP(+) is bound by residues 166-167, glutamine 190, 216-221, and 270-280; these read SN, YAALGA, and KSFNKKRIKEN.

It belongs to the aldo/keto reductase family. In terms of assembly, monomer. The N-terminus is blocked.

It is found in the cytoplasm. The catalysed reaction is prostaglandin F2alpha + NADP(+) = prostaglandin D2 + NADPH + H(+). Its pathway is lipid metabolism; prostaglandin biosynthesis. Catalyzes the reduction of PGD(2) and PGH(2) to PGF(2 alpha) and a stereoisomer, respectively. It has a broad substrate specificity and also reduces other carbonyl compounds. The polypeptide is Prostaglandin F synthase 1 (Bos taurus (Bovine)).